The chain runs to 110 residues: Insulin (110 aa).

The N-terminal stretch at 1 to 24 (MALWMRLLPLLVLLALWGPDPASA) is a signal peptide. Cystine bridges form between cysteine 31–cysteine 96, cysteine 43–cysteine 109, and cysteine 95–cysteine 100. Residues 57–87 (EAEDLQVGQVELGGGPGAGSLQPLALEGSLQ) constitute a propeptide, c peptide.

The protein belongs to the insulin family. Heterodimer of a B chain and an A chain linked by two disulfide bonds.

The protein resides in the secreted. In terms of biological role, insulin decreases blood glucose concentration. It increases cell permeability to monosaccharides, amino acids and fatty acids. It accelerates glycolysis, the pentose phosphate cycle, and glycogen synthesis in liver. This Pan troglodytes (Chimpanzee) protein is Insulin (INS).